The following is a 73-amino-acid chain: UPF0435 protein Lm4b_01721 (73 aa).

This sequence belongs to the UPF0435 family.

The polypeptide is UPF0435 protein Lm4b_01721 (Listeria monocytogenes serotype 4b (strain CLIP80459)).